Here is a 372-residue protein sequence, read N- to C-terminus: Alanine dehydrogenase 2 (372 aa).

His-95 is a catalytic residue. Residue 169 to 199 (KVTIIGGGQAGTNAAKIALGLGADVTILDVN) participates in NAD(+) binding.

Belongs to the AlaDH/PNT family.

The catalysed reaction is L-alanine + NAD(+) + H2O = pyruvate + NH4(+) + NADH + H(+). It functions in the pathway amino-acid degradation; L-alanine degradation via dehydrogenase pathway; NH(3) and pyruvate from L-alanine: step 1/1. In terms of biological role, may play a role in cell wall synthesis as L-alanine is an important constituent of the peptidoglycan layer. The chain is Alanine dehydrogenase 2 (ald2) from Staphylococcus aureus (strain MRSA252).